Reading from the N-terminus, the 217-residue chain is MNIGIIVFPGSNCDRDVRWATEGCLGVPTSFLWHETTDLDGFDAIVIPGGFSYGDYLRCGAIARFAPVLNSLISFVDKGGKVLGICNGFQILTELGLLQGALTRNKNLHFICDRANLSIESTKSTWMKNYKKHDSISLPIAHGEGRYQCSSDVLKKLQDDDSVALRYADNPNGSIHDIAGITNKKGNVLGMMPHPERACDDALGDIDGKSILSTLLS.

One can recognise a Glutamine amidotransferase type-1 domain in the interval 2–217 (NIGIIVFPGS…GKSILSTLLS (216 aa)). Catalysis depends on Cys-86, which acts as the Nucleophile. Active-site residues include His-194 and Glu-196.

As to quaternary structure, part of the FGAM synthase complex composed of 1 PurL, 1 PurQ and 2 PurS subunits.

It localises to the cytoplasm. The enzyme catalyses N(2)-formyl-N(1)-(5-phospho-beta-D-ribosyl)glycinamide + L-glutamine + ATP + H2O = 2-formamido-N(1)-(5-O-phospho-beta-D-ribosyl)acetamidine + L-glutamate + ADP + phosphate + H(+). The catalysed reaction is L-glutamine + H2O = L-glutamate + NH4(+). It functions in the pathway purine metabolism; IMP biosynthesis via de novo pathway; 5-amino-1-(5-phospho-D-ribosyl)imidazole from N(2)-formyl-N(1)-(5-phospho-D-ribosyl)glycinamide: step 1/2. In terms of biological role, part of the phosphoribosylformylglycinamidine synthase complex involved in the purines biosynthetic pathway. Catalyzes the ATP-dependent conversion of formylglycinamide ribonucleotide (FGAR) and glutamine to yield formylglycinamidine ribonucleotide (FGAM) and glutamate. The FGAM synthase complex is composed of three subunits. PurQ produces an ammonia molecule by converting glutamine to glutamate. PurL transfers the ammonia molecule to FGAR to form FGAM in an ATP-dependent manner. PurS interacts with PurQ and PurL and is thought to assist in the transfer of the ammonia molecule from PurQ to PurL. The chain is Phosphoribosylformylglycinamidine synthase subunit PurQ from Prochlorococcus marinus (strain NATL2A).